Consider the following 101-residue polypeptide: Diptericin-D (101 aa).

The first 18 residues, 1–18 (MKLFYLLVICALSLAVMA), serve as a signal peptide directing secretion. Residues threonine 28 and threonine 72 are each glycosylated (O-linked (GalNAc...) threonine). Phenylalanine 100 is subject to Phenylalanine amide.

The protein belongs to the attacin/sarcotoxin-2 family.

Its function is as follows. Has activity against E.coli. The sequence is that of Diptericin-D from Protophormia terraenovae (Northern blowfly).